Here is a 401-residue protein sequence, read N- to C-terminus: Coenzyme A biosynthesis bifunctional protein CoaBC (401 aa).

The interval 1-190 (MQTLAGKKIL…FQPKPLQDKS (190 aa)) is phosphopantothenoylcysteine decarboxylase. Catalysis depends on Cys159, which acts as the Proton donor. The interval 191-401 (ILITAGPTRE…LKQIQTLMGH (211 aa)) is phosphopantothenate--cysteine ligase. Residues Asp279, Lys289, 307-310 (PDIV), Phe326, Lys340, and Lys344 each bind CTP.

It in the N-terminal section; belongs to the HFCD (homo-oligomeric flavin containing Cys decarboxylase) superfamily. This sequence in the C-terminal section; belongs to the PPC synthetase family. Mg(2+) serves as cofactor. It depends on FMN as a cofactor.

It carries out the reaction N-[(R)-4-phosphopantothenoyl]-L-cysteine + H(+) = (R)-4'-phosphopantetheine + CO2. It catalyses the reaction (R)-4'-phosphopantothenate + L-cysteine + CTP = N-[(R)-4-phosphopantothenoyl]-L-cysteine + CMP + diphosphate + H(+). The protein operates within cofactor biosynthesis; coenzyme A biosynthesis; CoA from (R)-pantothenate: step 2/5. It participates in cofactor biosynthesis; coenzyme A biosynthesis; CoA from (R)-pantothenate: step 3/5. Its function is as follows. Catalyzes two sequential steps in the biosynthesis of coenzyme A. In the first step cysteine is conjugated to 4'-phosphopantothenate to form 4-phosphopantothenoylcysteine. In the second step the latter compound is decarboxylated to form 4'-phosphopantotheine. The chain is Coenzyme A biosynthesis bifunctional protein CoaBC from Vibrio vulnificus (strain CMCP6).